The chain runs to 529 residues: Corneodesmosin (529 aa).

An N-terminal signal peptide occupies residues 1–32; that stretch reads MGSSRAPWMGRVGGHGMMALLLAGLLLPGTLA. Disordered stretches follow at residues 38 to 248 and 383 to 492; these read FSDP…SVSG and GSTG…SSAG. Low complexity-rich tracts occupy residues 58–83, 90–100, 111–175, 189–231, 392–408, and 426–441; these read GKGDSSGFSSYSGSSSSGSSISSARS, GSSSGSSIAQG, GYSQ…NGSA, PSQP…SGGP, SPSSSRVPSSSSISSSS, and PGTGSFSSSSSSQSSG. A glycan (N-linked (GlcNAc...) asparagine) is linked at N172. Residues 449-467 show a composition bias toward polar residues; the sequence is GSKSSSSGHPCMSVSSLTL.

Exclusively expressed in skin.

Its subcellular location is the secreted. Functionally, important for the epidermal barrier integrity. This Homo sapiens (Human) protein is Corneodesmosin (CDSN).